A 632-amino-acid chain; its full sequence is tRNA uridine 5-carboxymethylaminomethyl modification enzyme MnmG (632 aa).

FAD contacts are provided by residues 13–18 (GGGHAG), Val125, and Ser180. 273-287 (GPRYCPSIEDKINRF) serves as a coordination point for NAD(+). Residue Gln370 coordinates FAD.

Belongs to the MnmG family. As to quaternary structure, homodimer. Heterotetramer of two MnmE and two MnmG subunits. It depends on FAD as a cofactor.

The protein localises to the cytoplasm. Its function is as follows. NAD-binding protein involved in the addition of a carboxymethylaminomethyl (cmnm) group at the wobble position (U34) of certain tRNAs, forming tRNA-cmnm(5)s(2)U34. This Shewanella sediminis (strain HAW-EB3) protein is tRNA uridine 5-carboxymethylaminomethyl modification enzyme MnmG.